Reading from the N-terminus, the 631-residue chain is MAGKFRCILLLIAGLFVSSLSYAENTEIPSYEEGISLFDVEATLQPDGVLDIKENIHFQARNQQIKHGFYRDLPRLWMQPDGDAALLNYHIVGVTRDGIPEPWHLDWHIGLMSIVVGDKQRFLPQGDYHYQIHYQVKNAFLREGDSDLLIWNVTGNHWPFEIYKTRFSLQFSNIAGNPFSEIDLFTGEEGDTYRNGRILEDGRIESRDPFYREDFTVLYRWPHALLSNASAPQTTNIFSHLLLPSTSSLLIWFPCLFLVCGWLYLWKRRPQFTPVDVIETDVIPPDYTPGMLRLDAKLVYDDKGFCADIVNLIVKGKIHLEDQSDKNQQILIRVNEGATRNNAVLLPAEQLLLEALFRKGDKVVLTGRRNRVLRRAFLRMQKFYLPRKKSSFYRSDTFLQWGGLAILAVILYGNLSPVGWAGMSLVGDMFIMICWIIPFLFCSLELLFARDDDKPCVNRVIITLFLPLICSGVAFYSLYINVGDVFFYWYMPAGYFTAVCLTGYLTGMGYIFLPKFTQTGQQRYAHGEAIVNYLARKEAATHSGRRRKGETRKLDYALLGWAISANLGREWALRIAPSLSSAIRAPEIARNGVLFSLQTHLSCGANTSLLGRSYSGGGAGGGAGGGGGGGW.

This is an uncharacterized protein from Escherichia coli (strain K12).